The primary structure comprises 283 residues: Cyclin-C (283 aa).

The Cyclin N-terminal domain occupies Asn-46–Glu-144. Positions Thr-252 to Ser-283 are disordered. The segment covering Glu-267–Ser-283 has biased composition (polar residues).

It belongs to the cyclin family. Cyclin C subfamily. Component of the Mediator complex. The cylin/CDK pair formed by ccnc/cdk8 also associates with the large subunit of RNA polymerase II.

It is found in the nucleus. In terms of biological role, component of the Mediator complex, a coactivator involved in regulated gene transcription of nearly all RNA polymerase II-dependent genes. Mediator functions as a bridge to convey information from gene-specific regulatory proteins to the basal RNA polymerase II transcription machinery. Mediator is recruited to promoters by direct interactions with regulatory proteins and serves as a scaffold for the assembly of a functional preinitiation complex with RNA polymerase II and the general transcription factors. Binds to and activates cyclin-dependent kinase cdk8 that phosphorylates the CTD (C-terminal domain) of the large subunit of RNA polymerase II (RNAp II), which may inhibit the formation of a transcription initiation complex. In Xenopus tropicalis (Western clawed frog), this protein is Cyclin-C (ccnc).